Consider the following 1392-residue polypeptide: DNA-directed RNA polymerase subunit beta (1392 aa).

A disordered region spans residues 1372-1392 (LSSYAEEDPDEGPEALPEAAE).

The protein belongs to the RNA polymerase beta chain family. As to quaternary structure, the RNAP catalytic core consists of 2 alpha, 1 beta, 1 beta' and 1 omega subunit. When a sigma factor is associated with the core the holoenzyme is formed, which can initiate transcription.

The catalysed reaction is RNA(n) + a ribonucleoside 5'-triphosphate = RNA(n+1) + diphosphate. Its function is as follows. DNA-dependent RNA polymerase catalyzes the transcription of DNA into RNA using the four ribonucleoside triphosphates as substrates. This chain is DNA-directed RNA polymerase subunit beta, found in Sphingopyxis alaskensis (strain DSM 13593 / LMG 18877 / RB2256) (Sphingomonas alaskensis).